The sequence spans 290 residues: Small ribosomal subunit biogenesis GTPase RsgA (290 aa).

In terms of domain architecture, CP-type G spans 62 to 213 (KNSLVRPPIV…IADTPGFSSL (152 aa)). GTP-binding positions include 111 to 114 (SKLD) and 156 to 164 (GQTGVGKST). Zn(2+) is bound by residues C237, C242, H244, and C250.

This sequence belongs to the TRAFAC class YlqF/YawG GTPase family. RsgA subfamily. Monomer. Associates with 30S ribosomal subunit, binds 16S rRNA. Zn(2+) serves as cofactor.

It is found in the cytoplasm. Functionally, one of several proteins that assist in the late maturation steps of the functional core of the 30S ribosomal subunit. Helps release RbfA from mature subunits. May play a role in the assembly of ribosomal proteins into the subunit. Circularly permuted GTPase that catalyzes slow GTP hydrolysis, GTPase activity is stimulated by the 30S ribosomal subunit. The polypeptide is Small ribosomal subunit biogenesis GTPase RsgA (Streptococcus agalactiae serotype III (strain NEM316)).